We begin with the raw amino-acid sequence, 1382 residues long: ATP-dependent RNA helicase TDRD9 (1382 aa).

A disordered region spans residues 36–62 (AAREEVQRQDVAPGAGPAAQAPALAQA). A compositionally biased stretch (low complexity) spans 47–62 (APGAGPAAQAPALAQA). The region spanning 142-308 (VSLIESNSVV…FAVPVQNKMN (167 aa)) is the Helicase ATP-binding domain. 155–162 (GATGSGKS) is an ATP binding site. Positions 254 to 257 (DEVH) match the DEAH box motif. One can recognise a Helicase C-terminal domain in the interval 377 to 544 (SGAQFVLERS…ILKVKLLDMG (168 aa)). Residues 944–1004 (HPHPDLVCLA…MEIPCQFLEL (61 aa)) form the Tudor domain.

The protein belongs to the DEAD box helicase family. DEAH subfamily. In terms of assembly, interacts with piRNA-associated proteins PIWIL1 and PIWIL4.

It localises to the cytoplasm. The protein localises to the nucleus. The catalysed reaction is ATP + H2O = ADP + phosphate + H(+). ATP-binding RNA helicase required during spermatogenesis. Required to repress transposable elements and prevent their mobilization, which is essential for the germline integrity. Acts via the piRNA metabolic process, which mediates the repression of transposable elements during meiosis by forming complexes composed of piRNAs and Piwi proteins and governs the methylation and subsequent repression of transposons. Acts downstream of piRNA biogenesis: exclusively required for transposon silencing in the nucleus, suggesting that it acts as a nuclear effector in the nucleus together with PIWIL4. The polypeptide is ATP-dependent RNA helicase TDRD9 (Homo sapiens (Human)).